Here is a 107-residue protein sequence, read N- to C-terminus: Putative double-stranded DNA mimic protein NTHI1680 (107 aa).

It belongs to the putative dsDNA mimic protein family.

Its function is as follows. May act as a double-stranded DNA (dsDNA) mimic. Probably regulates the activity of a dsDNA-binding protein. In Haemophilus influenzae (strain 86-028NP), this protein is Putative double-stranded DNA mimic protein NTHI1680.